The chain runs to 276 residues: Glucosamine-6-phosphate deaminase 2 (276 aa).

Aspartate 72 serves as the catalytic Proton acceptor; for enolization step. Residues 106-130 adopt a coiled-coil conformation; the sequence is ILDGNATDLQAECDAFEKKIKEAGG. Aspartate 141 (for ring-opening step) is an active-site residue. Histidine 143 (proton acceptor; for ring-opening step) is an active-site residue. Glutamate 148 serves as the catalytic For ring-opening step. Position 161 is a phosphothreonine (threonine 161).

It belongs to the glucosamine/galactosamine-6-phosphate isomerase family. As to quaternary structure, homohexamer.

It is found in the cytoplasm. The catalysed reaction is alpha-D-glucosamine 6-phosphate + H2O = beta-D-fructose 6-phosphate + NH4(+). Its pathway is nucleotide-sugar biosynthesis; UDP-N-acetyl-alpha-D-glucosamine biosynthesis; alpha-D-glucosamine 6-phosphate from D-fructose 6-phosphate: step 1/1. With respect to regulation, allosterically activated by N-acetylglucosamine-6-phosphate (GlcNAc6P). Functionally, catalyzes the reversible conversion of alpha-D-glucosamine 6-phosphate (GlcN-6P) into beta-D-fructose 6-phosphate (Fru-6P) and ammonium ion, a regulatory reaction step in de novo uridine diphosphate-N-acetyl-alpha-D-glucosamine (UDP-GlcNAc) biosynthesis via hexosamine pathway. Deamination is coupled to aldo-keto isomerization mediating the metabolic flux from UDP-GlcNAc toward Fru-6P. At high ammonium level can drive amination and isomerization of Fru-6P toward hexosamines and UDP-GlcNAc synthesis. Has a role in fine tuning the metabolic fluctuations of cytosolic UDP-GlcNAc and their effects on hyaluronan synthesis that occur during tissue remodeling. This Bos taurus (Bovine) protein is Glucosamine-6-phosphate deaminase 2.